A 290-amino-acid chain; its full sequence is 4-hydroxybenzoate octaprenyltransferase (290 aa).

The next 9 helical transmembrane spans lie at 23 to 43 (IGTELVFWPTMWALWIASDGY), 46 to 66 (LKMFVVMTLGVLFMRAAGCAI), 96 to 116 (AIWVFLALVAASAALLLFLPI), 118 to 138 (TFYWSFGALFLAFIYPFMKRY), 141 to 161 (LPQVFLGAAFSWAIPMAYTAT), 169 to 189 (CWLLYFGNLAWTVAYDTQYAI), 212 to 232 (IPIISTLQLSSLLLIGMALYI), 235 to 255 (LLFPWGIIGLVVVAVDFIYQW), and 265 to 285 (LCFWAFRHNRWVGLIIFLAIL).

It belongs to the UbiA prenyltransferase family. Mg(2+) is required as a cofactor.

It localises to the cell inner membrane. The enzyme catalyses all-trans-octaprenyl diphosphate + 4-hydroxybenzoate = 4-hydroxy-3-(all-trans-octaprenyl)benzoate + diphosphate. The protein operates within cofactor biosynthesis; ubiquinone biosynthesis. In terms of biological role, catalyzes the prenylation of para-hydroxybenzoate (PHB) with an all-trans polyprenyl group. Mediates the second step in the final reaction sequence of ubiquinone-8 (UQ-8) biosynthesis, which is the condensation of the polyisoprenoid side chain with PHB, generating the first membrane-bound Q intermediate 3-octaprenyl-4-hydroxybenzoate. The protein is 4-hydroxybenzoate octaprenyltransferase of Acinetobacter baylyi (strain ATCC 33305 / BD413 / ADP1).